Reading from the N-terminus, the 236-residue chain is Ubiquitin carboxyl-terminal hydrolase YUH1 (236 aa).

The 227-residue stretch at 7 to 233 folds into the UCH catalytic domain; sequence AVVPIESNPE…LNFAMLGLGP (227 aa). The interaction with ubiquitin stretch occupies residues 10–15; that stretch reads PIESNP. C90 (nucleophile) is an active-site residue. The tract at residues 149–157 is interaction with ubiquitin; that stretch reads FSTGQSEAP. H166 (proton donor) is an active-site residue. Residues 219–228 form an interaction with ubiquitin region; the sequence is NEEDVLNFAM.

Belongs to the peptidase C12 family.

The catalysed reaction is Thiol-dependent hydrolysis of ester, thioester, amide, peptide and isopeptide bonds formed by the C-terminal Gly of ubiquitin (a 76-residue protein attached to proteins as an intracellular targeting signal).. Functionally, deubiquitinating enzyme (DUB) that controls levels of cellular ubiquitin through processing of ubiquitin precursors and ubiquitinated proteins. Thiol protease that recognizes and hydrolyzes a peptide bond at the C-terminal glycine of either ubiquitin or RUB1. Preferentially cleaves ubiquitin from peptides and small adducts. The sequence is that of Ubiquitin carboxyl-terminal hydrolase YUH1 (YUH1) from Saccharomyces cerevisiae (strain ATCC 204508 / S288c) (Baker's yeast).